A 254-amino-acid chain; its full sequence is Ubiquinone/menaquinone biosynthesis C-methyltransferase UbiE (254 aa).

S-adenosyl-L-methionine is bound by residues threonine 77, aspartate 98, asparagine 126 to alanine 127, and serine 143.

The protein belongs to the class I-like SAM-binding methyltransferase superfamily. MenG/UbiE family.

The catalysed reaction is a 2-demethylmenaquinol + S-adenosyl-L-methionine = a menaquinol + S-adenosyl-L-homocysteine + H(+). It catalyses the reaction a 2-methoxy-6-(all-trans-polyprenyl)benzene-1,4-diol + S-adenosyl-L-methionine = a 5-methoxy-2-methyl-3-(all-trans-polyprenyl)benzene-1,4-diol + S-adenosyl-L-homocysteine + H(+). It functions in the pathway quinol/quinone metabolism; menaquinone biosynthesis; menaquinol from 1,4-dihydroxy-2-naphthoate: step 2/2. The protein operates within cofactor biosynthesis; ubiquinone biosynthesis. Its function is as follows. Methyltransferase required for the conversion of demethylmenaquinol (DMKH2) to menaquinol (MKH2) and the conversion of 2-polyprenyl-6-methoxy-1,4-benzoquinol (DDMQH2) to 2-polyprenyl-3-methyl-6-methoxy-1,4-benzoquinol (DMQH2). This chain is Ubiquinone/menaquinone biosynthesis C-methyltransferase UbiE, found in Blochmanniella floridana.